The sequence spans 446 residues: Methionine aminopeptidase 2 (446 aa).

Residues Met1–Ile85 form a disordered region. Residues Glu8–Glu32 are compositionally biased toward basic and acidic residues. Residues Ser42–Ile58 are compositionally biased toward acidic residues. Residues Lys73–Ile85 show a composition bias toward basic residues. Position 197 (His197) interacts with substrate. Residues Asp217, Asp228, and His299 each coordinate a divalent metal cation. A substrate-binding site is contributed by His307. Residues Glu332 and Glu427 each coordinate a divalent metal cation.

Belongs to the peptidase M24A family. Methionine aminopeptidase eukaryotic type 2 subfamily. It depends on Co(2+) as a cofactor. Requires Zn(2+) as cofactor. Mn(2+) is required as a cofactor. The cofactor is Fe(2+).

The protein localises to the cytoplasm. The enzyme catalyses Release of N-terminal amino acids, preferentially methionine, from peptides and arylamides.. Cotranslationally removes the N-terminal methionine from nascent proteins. The N-terminal methionine is often cleaved when the second residue in the primary sequence is small and uncharged (Met-Ala-, Cys, Gly, Pro, Ser, Thr, or Val). The sequence is that of Methionine aminopeptidase 2 from Candida albicans (strain SC5314 / ATCC MYA-2876) (Yeast).